The chain runs to 670 residues: MSSPPPFTSIFGGPAESAEEIDADADNSQLKPHNRSNVTATSAKLVGKSVAPFLAKHVPDQYAPLGSQNREPAALSSANSRYCYRHRPDRKCRRQADEPTMDKLQRELESLPQSDQQGIAHVWSLFSAAPAKHRKLILQGIMAQCCFPQLSFISTTVRDLIRIDFIAALPPEISFKILCYLDTTSLCKAAQVSRRWRALADDDVVWHRMCEQHIHRKCKKCGWGLPLLDRKRLRESKREIEIRATTWDVNGTSPKATPALPEDASPVADSSGTGKRKPEPSEEETAVVKRHCQSLAMRPEGSEDYFKTRYRPWKEVYKDRFKVGTNWKYGRCSIRIFKGHTNGVMCLQFEDNILATGSYDATIKIWDTDTGQEIRTLRGHESGIRCLQFDDTKLISGSMDGSVKVWNWRTGDCISTYTGHRGGVIGLHFDATILASASVDKTVKIWNFEDKSTCLLRGHTDWVNAVRVDTASRTVFSASDDCTVRLWDLDTKSCIRTFHGHVGQVQQVVPLPREFEFEEHDVECENDNLSTVSGDTEPASLQATLGLESNAVISQSSPFGPSFESGRTAPPRYIVTSALDSTIRLWETSTGRCLRTFFGHLEGVWALAADTLRIVSGAEDRMIKIWDPRTGKCERTFTGHSGPVTCIGLGDSRFATGSEDCEVRMYSFQS.

Positions 1-38 are disordered; that stretch reads MSSPPPFTSIFGGPAESAEEIDADADNSQLKPHNRSNV. The segment covering 27–38 has biased composition (polar residues); sequence NSQLKPHNRSNV. The 47-residue stretch at 163–209 folds into the F-box domain; it reads IDFIAALPPEISFKILCYLDTTSLCKAAQVSRRWRALADDDVVWHRM. A disordered region spans residues 249–287; the sequence is VNGTSPKATPALPEDASPVADSSGTGKRKPEPSEEETAV. 7 WD repeats span residues 339 to 376, 379 to 418, 420 to 456, 458 to 499, 553 to 596, 599 to 636, and 639 to 670; these read GHTN…EIRT, GHES…STYT, HRGG…TCLL, GHTD…RTFH, ISQS…CLRT, GHLE…CERT, and GHSG…SFQS.

Belongs to the WD repeat MET30/SCONB/SCON-2 family. As to quaternary structure, component of the SCF(sconB) E3 ubiquitin ligase complex.

Its pathway is protein modification; protein ubiquitination. Functionally, component of the SCF(sconB) E3 ubiquitin ligase complex involved in the regulation of sulfur metabolite repression, probably by mediating the inactivation or degradation of the metR transcription factor. The protein is Probable E3 ubiquitin ligase complex SCF subunit sconB (sconB) of Aspergillus niger (strain ATCC MYA-4892 / CBS 513.88 / FGSC A1513).